The following is a 131-amino-acid chain: Small ribosomal subunit protein uS8 (131 aa).

The protein belongs to the universal ribosomal protein uS8 family. In terms of assembly, part of the 30S ribosomal subunit. Contacts proteins S5 and S12.

Its function is as follows. One of the primary rRNA binding proteins, it binds directly to 16S rRNA central domain where it helps coordinate assembly of the platform of the 30S subunit. The chain is Small ribosomal subunit protein uS8 from Laribacter hongkongensis (strain HLHK9).